Consider the following 39-residue polypeptide: Photosystem II reaction center protein I (39 aa).

The chain crosses the membrane as a helical span at residues 6 to 26; the sequence is ISVYSVVFFFIGIFMFGFLAS.

It belongs to the PsbI family. PSII is composed of 1 copy each of membrane proteins PsbA, PsbB, PsbC, PsbD, PsbE, PsbF, PsbH, PsbI, PsbJ, PsbK, PsbL, PsbM, PsbT, PsbX, PsbY, PsbZ, Psb30/Ycf12, peripheral proteins PsbO, CyanoQ (PsbQ), PsbU, PsbV and a large number of cofactors. It forms dimeric complexes.

It localises to the cellular thylakoid membrane. Its function is as follows. One of the components of the core complex of photosystem II (PSII), required for its stability and/or assembly. PSII is a light-driven water:plastoquinone oxidoreductase that uses light energy to abstract electrons from H(2)O, generating O(2) and a proton gradient subsequently used for ATP formation. It consists of a core antenna complex that captures photons, and an electron transfer chain that converts photonic excitation into a charge separation. This Synechococcus sp. (strain RCC307) protein is Photosystem II reaction center protein I.